A 158-amino-acid chain; its full sequence is 2-C-methyl-D-erythritol 2,4-cyclodiphosphate synthase (158 aa).

D8 and H10 together coordinate a divalent metal cation. 4-CDP-2-C-methyl-D-erythritol 2-phosphate-binding positions include D8–H10 and H34–S35. Residue H42 participates in a divalent metal cation binding. Residues D56–G58, F61–D65, A100–L106, T132–E135, F139, and K142 each bind 4-CDP-2-C-methyl-D-erythritol 2-phosphate.

This sequence belongs to the IspF family. As to quaternary structure, homotrimer. A divalent metal cation serves as cofactor.

The enzyme catalyses 4-CDP-2-C-methyl-D-erythritol 2-phosphate = 2-C-methyl-D-erythritol 2,4-cyclic diphosphate + CMP. The protein operates within isoprenoid biosynthesis; isopentenyl diphosphate biosynthesis via DXP pathway; isopentenyl diphosphate from 1-deoxy-D-xylulose 5-phosphate: step 4/6. In terms of biological role, involved in the biosynthesis of isopentenyl diphosphate (IPP) and dimethylallyl diphosphate (DMAPP), two major building blocks of isoprenoid compounds. Catalyzes the conversion of 4-diphosphocytidyl-2-C-methyl-D-erythritol 2-phosphate (CDP-ME2P) to 2-C-methyl-D-erythritol 2,4-cyclodiphosphate (ME-CPP) with a corresponding release of cytidine 5-monophosphate (CMP). This Clostridium tetani (strain Massachusetts / E88) protein is 2-C-methyl-D-erythritol 2,4-cyclodiphosphate synthase.